Consider the following 138-residue polypeptide: Large ribosomal subunit protein bL19 (138 aa).

This sequence belongs to the bacterial ribosomal protein bL19 family.

Its function is as follows. This protein is located at the 30S-50S ribosomal subunit interface and may play a role in the structure and function of the aminoacyl-tRNA binding site. The polypeptide is Large ribosomal subunit protein bL19 (Leptospira interrogans serogroup Icterohaemorrhagiae serovar copenhageni (strain Fiocruz L1-130)).